The following is a 701-amino-acid chain: Transcription factor PDR8 (701 aa).

The tract at residues 1–22 (MDGSHFPMKSTTGEPVSSGKKG) is disordered. The zn(2)-C6 fungal-type DNA-binding region spans 31-59 (CAFCRKRKLKCSQARPMCQQCVIRKLPQC).

The protein resides in the cytoplasm. The protein localises to the nucleus. Functionally, up-regulates the transcription of the genes for ATP-binding cassette (ABC) transporters YOR1 and PDR15, for major facilitator superfamily transporter AZR1, for pleiotropic drug resistance SNG1, for alpha-glucosidase YJL216C and for YLL056C. The sequence is that of Transcription factor PDR8 (PDR8) from Saccharomyces cerevisiae (strain ATCC 204508 / S288c) (Baker's yeast).